Reading from the N-terminus, the 595-residue chain is uncharacterized protein (595 aa).

9 helical membrane passes run 64–84 (VVFL…LIVF), 86–106 (IFYA…IGVL), 239–259 (FYVI…PVAS), 281–301 (FYLW…GILP), 334–354 (VHFI…LFFI), 368–388 (MFGI…HFII), 504–524 (FIYV…SYIM), 547–567 (YLFQ…GILT), and 571–591 (IIAG…LFKF).

It to M.jannaschii FlaJ.

The protein localises to the cell membrane. This is an uncharacterized protein from Methanocaldococcus jannaschii (strain ATCC 43067 / DSM 2661 / JAL-1 / JCM 10045 / NBRC 100440) (Methanococcus jannaschii).